The chain runs to 707 residues: Caprin-1 (707 aa).

2 stretches are compositionally biased toward low complexity: residues 1–15 (MPSA…SKSS) and 22–43 (GSSG…PATG). Positions 1–48 (MPSATSHSGSGSKSSGPPPPSGSSGSEAAAGAAAPASQHPATGTGAVQ) are disordered. Residue P2 is modified to N-acetylproline. A Phosphoserine modification is found at S10. The stretch at 58–92 (VIDKKLRNLEKKKGKLDDYQERMNKGERLNQDQLD) forms a coiled coil. S113 is subject to Phosphoserine. Positions 123–151 (KTIKKTARREQLMREEAEQKRLKTVLELQ) form a coiled coil. R163 carries the post-translational modification Omega-N-methylarginine. Low complexity predominate over residues 325-335 (LQQQPQAASPS). The segment at 325–347 (LQQQPQAASPSVPEPHSLTPVAQ) is disordered. A phosphoserine mark is found at S333 and S341. The G3BP1-binding stretch occupies residues 358–379 (QDLMAQMQGPYNFIQDSMLDFE). Disordered stretches follow at residues 412–496 (ESRL…AGTS), 526–558 (PANE…EQTE), and 570–707 (TYHG…QQVN). A compositionally biased stretch (polar residues) spans 431 to 452 (PLVSSTSEGYTASQPLYQPSHA). Residues 453–462 (TEQRPQKEPM) are compositionally biased toward basic and acidic residues. The span at 465-474 (IQATISLNTD) shows a compositional bias: polar residues. Low complexity predominate over residues 475 to 489 (QTTASSSLPAASQPQ). 2 stretches are compositionally biased toward polar residues: residues 533–552 (LKQQ…SQPH) and 572–603 (HGSQ…QPYY). Residue Y623 is modified to Phosphotyrosine. Residues R624 and R631 each carry the omega-N-methylarginine modification. 2 positions are modified to phosphotyrosine: Y634 and Y637. R638 is subject to Omega-N-methylarginine. The span at 640-655 (SFSNTPNSGYSQSQFT) shows a compositional bias: polar residues. Residues S642 and S647 are each glycosylated (O-linked (GlcNAc) serine). 4 positions are modified to phosphotyrosine: Y649, Y660, Y663, and Y668. Composition is skewed to low complexity over residues 674 to 684 (RGSGQSGPRGA) and 695 to 707 (NRGM…QQVN). At R696 the chain carries Asymmetric dimethylarginine; alternate. R696 carries the post-translational modification Omega-N-methylarginine; alternate.

It belongs to the caprin family. As to quaternary structure, may form homomultimers. Interacts with G3BP1; interaction is direct and promotes stress granule formation. Interacts with G3BP2; interaction is direct and promotes stress granule formation. Interacts with PQBP1. Interacts with DDX3X. Interacts (when phosphorylated by EPHA4) with FMR1; interaction with FMR1 promotes formation of a membraneless compartment. Post-translationally, tyrosine phosphorylation by EPHA4 promotes interaction with FMR1 and liquid-liquid phase separation (LLPS) for the formation of a membraneless compartment that concentrates mRNAs with associated regulatory factors. O-glycosylated (O-GlcNAcylated), in a cell cycle-dependent manner. O-glycosylation by OGT inhibit ability to undergo liquid-liquid phase separation (LLPS). In terms of tissue distribution, highest expression in thymus, spleen and brain (at protein level). Lower levels in kidney, muscle and liver (at protein level).

The protein localises to the cytoplasm. It localises to the cytoplasmic ribonucleoprotein granule. It is found in the cytosol. Its subcellular location is the cell projection. The protein resides in the dendrite. The protein localises to the lamellipodium. With respect to regulation, ability to mediate liquid-liquid phase separation is regulated by ATP: moderate concentrations of ATP enhance phase separation, whereas high concentrations of ATP lead to inhibition of phase separation. MRNA-binding protein that acts as a regulator of mRNAs transport, translation and/or stability, and which is involved in neurogenesis, synaptic plasticity in neurons and cell proliferation and migration in multiple cell types. Plays an essential role in cytoplasmic stress granule formation. Acts as an mRNA regulator by mediating formation of some phase-separated membraneless compartment: undergoes liquid-liquid phase separation upon binding to target mRNAs, leading to assemble mRNAs into cytoplasmic ribonucleoprotein granules that concentrate mRNAs with associated regulatory factors. Undergoes liquid-liquid phase separation following phosphorylation and interaction with FMR1, promoting formation of cytoplasmic ribonucleoprotein granules that concentrate mRNAs with factors that inhibit translation and mediate deadenylation of target mRNAs. In these cytoplasmic ribonucleoprotein granules, CAPRIN1 mediates recruitment of CNOT7 deadenylase, leading to mRNA deadenylation and degradation. Binds directly and selectively to MYC and CCND2 mRNAs. In neuronal cells, directly binds to several mRNAs associated with RNA granules, including BDNF, CAMK2A, CREB1, MAP2, NTRK2 mRNAs, as well as to GRIN1 and KPNB1 mRNAs, but not to rRNAs. The sequence is that of Caprin-1 (Caprin1) from Mus musculus (Mouse).